The primary structure comprises 377 residues: Transmembrane protein 237A (377 aa).

Composition is skewed to basic and acidic residues over residues 1–11, 43–64, and 74–87; these read MCVTSRADKMP, LESR…DNPP, and HTFE…DHPN. The interval 1–124 is disordered; sequence MCVTSRADKM…NQSHNELGVE (124 aa). Transmembrane regions (helical) follow at residues 198 to 218, 239 to 259, 273 to 293, and 326 to 346; these read IIGL…IIVV, LAYP…VSAF, GFLT…ALIL, and PWIV…VFVA.

This sequence belongs to the TMEM237 family.

It is found in the membrane. The protein localises to the cell projection. It localises to the cilium. In terms of biological role, component of the transition zone in primary cilia. Required for ciliogenesis. The sequence is that of Transmembrane protein 237A (tmem237a) from Danio rerio (Zebrafish).